The chain runs to 526 residues: Lysine--tRNA ligase (526 aa).

The Mg(2+) site is built by Glu431 and Glu438.

The protein belongs to the class-II aminoacyl-tRNA synthetase family. As to quaternary structure, homodimer. It depends on Mg(2+) as a cofactor.

Its subcellular location is the cytoplasm. It catalyses the reaction tRNA(Lys) + L-lysine + ATP = L-lysyl-tRNA(Lys) + AMP + diphosphate. The protein is Lysine--tRNA ligase of Chlamydia felis (strain Fe/C-56) (Chlamydophila felis).